We begin with the raw amino-acid sequence, 510 residues long: MDEKLPESVDVVVLGTGLPEAILASACARAGLSVLHLDRNEYYGGDWSSFTMSMVHEVTENQVKKLDSSEISKLSELLTENEQLIELGNREIVENIEMTWIPRGKDEEKPMKTQLEEASQMRRFSIDLVPKILLSKGAMVQTLCDSQVSHYAEFKLVNRQLCPTETPEAGITLNPVPCSKGEIFQSNALSILEKRALMKFITFCTQWSTKDTEEGRKLLAEHADRPFSEFLEQMGVGKTLQSFIINTIGILQQRPTAMTGMLASCQFMDSVGHFGPSPFLFPLYGCGELSQCFCRLAAVFGSLYCLGRPVQAIVKKDGKITAVIANGDRVNCRYIVMSPRFVPETVPASSTLKIERIVYATDKSIKEAEKEQLTLLNLASLRPDAAVSRLVEVGFEACTAPKGHFLVHATGTQEGETSVKTIAEKIFEKNEVEPYWKMSFTANSMKFDTAGAENVVVAPPVDANLHYASVVEECRQLFCTTWPELDFLPRAMKKEEEEEEEPETEEIAEN.

It belongs to the Rab GDI family. As to quaternary structure, may interact with rab-5, rab-7 and rab-11. Does not interact with rab-3, rab-27 and rab-10. Expressed in several neurons including head neurons, motor neurons located in the ventral nerve cord, HSN and CAN neurons, and tail neurons, and in muscles such as body-wall, pharyngeal, intestinal and anal sphincter. Also expressed in seam cells, the hypodermis and the intestine.

The protein localises to the cytoplasm. Functionally, substrate-binding subunit of the Rab geranylgeranyltransferase (GGTase) complex. Binds unprenylated Rab proteins and presents the substrate peptide to the catalytic component B and remains bound to it after the geranylgeranyl transfer reaction. The component A is thought to be regenerated by transferring its prenylated Rab back to the donor membrane. Plays a role in neurotransmitter release from presynaptic terminals at neuromuscular junctions. Positively regulates the function of rab-27 in synaptic transmission most likely through mediating rab-27 prenylation. The chain is Rab proteins geranylgeranyltransferase component A 1 from Caenorhabditis elegans.